Consider the following 428-residue polypeptide: Tyrosine--tRNA ligase (428 aa).

An L-tyrosine-binding site is contributed by Tyr-41. Residues 46-55 (PTADSLHLGH) carry the 'HIGH' region motif. L-tyrosine contacts are provided by Tyr-179 and Gln-183. Residues 239–243 (KFGKT) carry the 'KMSKS' region motif. Lys-242 is a binding site for ATP. The S4 RNA-binding domain occupies 361 to 418 (ADLLQALVDSELQPSRGQARKTVASNAVTINGEKQADPEYVFSDSDRLFGRYTLLRRG).

Belongs to the class-I aminoacyl-tRNA synthetase family. TyrS type 1 subfamily. As to quaternary structure, homodimer.

It is found in the cytoplasm. The catalysed reaction is tRNA(Tyr) + L-tyrosine + ATP = L-tyrosyl-tRNA(Tyr) + AMP + diphosphate + H(+). Catalyzes the attachment of tyrosine to tRNA(Tyr) in a two-step reaction: tyrosine is first activated by ATP to form Tyr-AMP and then transferred to the acceptor end of tRNA(Tyr). This Klebsiella pneumoniae subsp. pneumoniae (strain ATCC 700721 / MGH 78578) protein is Tyrosine--tRNA ligase.